The sequence spans 399 residues: Putative glutamate--cysteine ligase 2 (399 aa).

A disordered region spans residues 377–399 (PAVGSSHGRTDPSRNGGPSHAGA).

The protein belongs to the glutamate--cysteine ligase type 2 family. YbdK subfamily.

It catalyses the reaction L-cysteine + L-glutamate + ATP = gamma-L-glutamyl-L-cysteine + ADP + phosphate + H(+). Its function is as follows. ATP-dependent carboxylate-amine ligase which exhibits weak glutamate--cysteine ligase activity. The sequence is that of Putative glutamate--cysteine ligase 2 from Thermobifida fusca (strain YX).